Consider the following 405-residue polypeptide: 1-deoxy-D-xylulose 5-phosphate reductoisomerase (405 aa).

The NADPH site is built by Thr16, Gly17, Ser18, Ile19, Gly42, Arg43, Asn44, and Asn130. A 1-deoxy-D-xylulose 5-phosphate-binding site is contributed by Lys131. Residue Glu132 participates in NADPH binding. Asp156 is a binding site for Mn(2+). Residues Ser157, Glu158, Ser192, and His215 each contribute to the 1-deoxy-D-xylulose 5-phosphate site. Glu158 contributes to the Mn(2+) binding site. Gly221 provides a ligand contact to NADPH. Positions 228, 233, 234, and 237 each coordinate 1-deoxy-D-xylulose 5-phosphate. Position 237 (Glu237) interacts with Mn(2+).

This sequence belongs to the DXR family. Mg(2+) is required as a cofactor. The cofactor is Mn(2+).

It catalyses the reaction 2-C-methyl-D-erythritol 4-phosphate + NADP(+) = 1-deoxy-D-xylulose 5-phosphate + NADPH + H(+). Its pathway is isoprenoid biosynthesis; isopentenyl diphosphate biosynthesis via DXP pathway; isopentenyl diphosphate from 1-deoxy-D-xylulose 5-phosphate: step 1/6. In terms of biological role, catalyzes the NADPH-dependent rearrangement and reduction of 1-deoxy-D-xylulose-5-phosphate (DXP) to 2-C-methyl-D-erythritol 4-phosphate (MEP). This is 1-deoxy-D-xylulose 5-phosphate reductoisomerase from Pasteurella multocida (strain Pm70).